Here is a 364-residue protein sequence, read N- to C-terminus: UDP-N-acetylglucosamine--N-acetylmuramyl-(pentapeptide) pyrophosphoryl-undecaprenol N-acetylglucosamine transferase (364 aa).

UDP-N-acetyl-alpha-D-glucosamine contacts are provided by residues 10-12 (TGG), N124, S195, I250, and Q295.

It belongs to the glycosyltransferase 28 family. MurG subfamily.

The protein localises to the cell membrane. The enzyme catalyses di-trans,octa-cis-undecaprenyl diphospho-N-acetyl-alpha-D-muramoyl-L-alanyl-D-glutamyl-meso-2,6-diaminopimeloyl-D-alanyl-D-alanine + UDP-N-acetyl-alpha-D-glucosamine = di-trans,octa-cis-undecaprenyl diphospho-[N-acetyl-alpha-D-glucosaminyl-(1-&gt;4)]-N-acetyl-alpha-D-muramoyl-L-alanyl-D-glutamyl-meso-2,6-diaminopimeloyl-D-alanyl-D-alanine + UDP + H(+). It participates in cell wall biogenesis; peptidoglycan biosynthesis. Functionally, cell wall formation. Catalyzes the transfer of a GlcNAc subunit on undecaprenyl-pyrophosphoryl-MurNAc-pentapeptide (lipid intermediate I) to form undecaprenyl-pyrophosphoryl-MurNAc-(pentapeptide)GlcNAc (lipid intermediate II). The chain is UDP-N-acetylglucosamine--N-acetylmuramyl-(pentapeptide) pyrophosphoryl-undecaprenol N-acetylglucosamine transferase from Bacillus cytotoxicus (strain DSM 22905 / CIP 110041 / 391-98 / NVH 391-98).